The primary structure comprises 689 residues: Poly(A)-specific ribonuclease PARN (689 aa).

Aspartate 66, glutamate 68, aspartate 354, and aspartate 459 together coordinate a divalent metal cation.

The protein belongs to the CAF1 family. Requires a divalent metal cation as cofactor. Widely expressed. Expressed in roots, stems, leaves and flowers.

Its subcellular location is the nucleus. It is found in the cytoplasm. It catalyses the reaction Exonucleolytic cleavage of poly(A) to 5'-AMP.. Functionally, 3'-exoribonuclease that has a preference for poly(A) tails of mRNAs, thereby efficiently degrading poly(A) tails. Exonucleolytic degradation of the poly(A) tail is often the first step in the decay of eukaryotic mRNAs. Essential for early development, possibly by participating in silencing certain maternal mRNAs translationally. May have a pivotal role in stress response. This is Poly(A)-specific ribonuclease PARN (PARN) from Arabidopsis thaliana (Mouse-ear cress).